Consider the following 414-residue polypeptide: Ribulose bisphosphate carboxylase/oxygenase activase (414 aa).

37 to 44 (GRKGEGKT) is an ATP binding site. The disordered stretch occupies residues 296–326 (RGYQTAPPPEAPVIQPVNNSSHKQKTSNTHL). The span at 311 to 326 (PVNNSSHKQKTSNTHL) shows a compositional bias: polar residues.

The protein belongs to the RuBisCO activase family.

In terms of biological role, activation of RuBisCO (ribulose-1,5-bisohosphate carboxylase/oxygenase; EC 4.1.1.39) involves the ATP-dependent carboxylation of the epsilon-amino group of lysine leading to a carbamate structure. The chain is Ribulose bisphosphate carboxylase/oxygenase activase (rca) from Nostoc sp. (strain PCC 7120 / SAG 25.82 / UTEX 2576).